The primary structure comprises 525 residues: Cobyric acid synthase (525 aa).

The 202-residue stretch at 251–452 (ELEIAVLYLP…FHGIFDNDLL (202 aa)) folds into the GATase cobBQ-type domain. Cys332 (nucleophile) is an active-site residue. Residue His444 is part of the active site.

It belongs to the CobB/CobQ family. CobQ subfamily.

It functions in the pathway cofactor biosynthesis; adenosylcobalamin biosynthesis. Its function is as follows. Catalyzes amidations at positions B, D, E, and G on adenosylcobyrinic A,C-diamide. NH(2) groups are provided by glutamine, and one molecule of ATP is hydrogenolyzed for each amidation. The protein is Cobyric acid synthase of Pelotomaculum thermopropionicum (strain DSM 13744 / JCM 10971 / SI).